The chain runs to 134 residues: Bet1-like protein At1g29060 (134 aa).

A compositionally biased stretch (gly residues) spans 1–12 (MASNRGAGGSLY). A disordered region spans residues 1–31 (MASNRGAGGSLYGGADPYRSREGLSTRNASG). Topologically, residues 1–110 (MASNRGAGGS…LSIIRSGNNH (110 aa)) are cytoplasmic. In terms of domain architecture, t-SNARE coiled-coil homology spans 40–102 (DPMHSDLDDE…KNNIRKLNLS (63 aa)). A helical; Anchor for type IV membrane protein membrane pass occupies residues 111 to 131 (IMHVVLFALLLFFILYMWSKM). At 132–134 (FKR) the chain is on the vesicular side.

This sequence belongs to the BET1 family.

The protein resides in the golgi apparatus membrane. The protein localises to the endoplasmic reticulum membrane. Its function is as follows. Required for vesicular transport from the ER to the Golgi complex. Functions as a SNARE associated with ER-derived vesicles. This is Bet1-like protein At1g29060 from Arabidopsis thaliana (Mouse-ear cress).